We begin with the raw amino-acid sequence, 267 residues long: Non-homologous end joining protein Ku (267 aa).

In terms of domain architecture, Ku spans 10–190 (ISFGLVSFPV…TKYTAKELEL (181 aa)).

This sequence belongs to the prokaryotic Ku family. As to quaternary structure, homodimer. Interacts with LigD.

With LigD forms a non-homologous end joining (NHEJ) DNA repair enzyme, which repairs dsDNA breaks with reduced fidelity. Binds linear dsDNA with 5'- and 3'- overhangs but not closed circular dsDNA nor ssDNA. Recruits and stimulates the ligase activity of LigD. The polypeptide is Non-homologous end joining protein Ku (Solibacter usitatus (strain Ellin6076)).